We begin with the raw amino-acid sequence, 275 residues long: Succinate dehydrogenase [ubiquinone] iron-sulfur subunit, mitochondrial (275 aa).

Residues 1 to 24 (MFSRRIQVLSPFLKHFVNRNARMM) constitute a mitochondrion transit peptide. In terms of domain architecture, 2Fe-2S ferredoxin-type spans 57–137 (PEVKPKLQKY…PTKIYPLPHC (81 aa)). C98, C103, C106, and C118 together coordinate [2Fe-2S] cluster. The region spanning 178-208 (DRAKLDGLYECILCACCSTSCPSYWWNSEEY) is the 4Fe-4S ferredoxin-type domain. C188, C191, and C194 together coordinate [4Fe-4S] cluster. C198 serves as a coordination point for [3Fe-4S] cluster. An a ubiquinone-binding site is contributed by W203. The [3Fe-4S] cluster site is built by C245 and C251. [4Fe-4S] cluster is bound at residue C255.

This sequence belongs to the succinate dehydrogenase/fumarate reductase iron-sulfur protein family. Component of complex II composed of four subunits: a flavoprotein (FP), an iron-sulfur protein (IP), and a cytochrome b composed of a large and a small subunit. The cofactor is [2Fe-2S] cluster. [3Fe-4S] cluster is required as a cofactor. [4Fe-4S] cluster serves as cofactor.

It localises to the mitochondrion inner membrane. The enzyme catalyses a quinone + succinate = fumarate + a quinol. It functions in the pathway carbohydrate metabolism; tricarboxylic acid cycle; fumarate from succinate (eukaryal route): step 1/1. In terms of biological role, iron-sulfur protein (IP) subunit of succinate dehydrogenase (SDH) that is involved in complex II of the mitochondrial electron transport chain and is responsible for transferring electrons from succinate to ubiquinone (coenzyme Q). The polypeptide is Succinate dehydrogenase [ubiquinone] iron-sulfur subunit, mitochondrial (sdh2) (Schizosaccharomyces pombe (strain 972 / ATCC 24843) (Fission yeast)).